The following is a 275-amino-acid chain: MVIKLYKNYAPSTHNGTLKGQVKSARGKNLISGKHRCGKGRNARGIITARHRGGGHKRLYRKIDFWRNKKNIYGRIVTIEYDPNRNAHICLIHYRNGEKRYILHPRGAIIGDTIVSGTEVSIKIGNALPLTEMPLGTAIHNLEITRGKGGQLARAAGAVAKLIAKEGKSATLKLPSGEVRLISKSCSATVGQVGNVGVNQKSLGRAGAQRWLGKRPVVRGVVMNPVDHPHGGGEGRAPIGRKKPTTPWGYPALGRKTRKVNKYSEKFIIRHRRKQ.

Residues 225–249 (PVDHPHGGGEGRAPIGRKKPTTPWG) are disordered.

The protein belongs to the universal ribosomal protein uL2 family. Part of the 50S ribosomal subunit.

Its subcellular location is the plastid. The sequence is that of Large ribosomal subunit protein uL2c (rpl2) from Cuscuta reflexa (Southern Asian dodder).